Here is a 511-residue protein sequence, read N- to C-terminus: Peroxisomal N(1)-acetyl-spermine/spermidine oxidase (511 aa).

Position 1 is an N-acetylmethionine (M1). Residues A24, E45, R53, and 69–70 (HW) contribute to the FAD site. Substrate-binding residues include H72 and V194. V247 contributes to the FAD binding site. N320 contributes to the substrate binding site. FAD is bound by residues E472 and 481–482 (TT). The short motif at 509–511 (PRL) is the Microbody targeting signal element.

It belongs to the flavin monoamine oxidase family. As to quaternary structure, monomer. It depends on FAD as a cofactor. As to expression, widely expressed. Not detected in spleen. Expressed at lower level in neoplastic tissues.

The protein localises to the peroxisome. Its subcellular location is the cytoplasm. The catalysed reaction is N(1)-acetylspermine + O2 + H2O = 3-acetamidopropanal + spermidine + H2O2. The enzyme catalyses N(1)-acetylspermidine + O2 + H2O = 3-acetamidopropanal + putrescine + H2O2. It catalyses the reaction N(1),N(12)-diacetylspermine + O2 + H2O = 3-acetamidopropanal + N(1)-acetylspermidine + H2O2. Its pathway is amine and polyamine metabolism; spermine metabolism. In terms of biological role, flavoenzyme which catalyzes the oxidation of N(1)-acetylspermine to spermidine and is thus involved in the polyamine back-conversion. Can also oxidize N(1)-acetylspermidine to putrescine. Substrate specificity: N(1)-acetylspermine = N(1)-acetylspermidine &gt; N(1),N(12)-diacylspermine &gt;&gt; spermine. Does not oxidize spermidine. Plays an important role in the regulation of polyamine intracellular concentration and has the potential to act as a determinant of cellular sensitivity to the antitumor polyamine analogs. This Homo sapiens (Human) protein is Peroxisomal N(1)-acetyl-spermine/spermidine oxidase (PAOX).